A 148-amino-acid polypeptide reads, in one-letter code: METGALRRPQLLPLLLLLCGGCPRAGGCNETGMLERLPLCGKAFADMMGKVDVWKWCNLSEFIVYYESFTNCTEMEANVVGCYWPNPLAQGFITGIHRQFFSNCTVDRVHLEDPPDEVLIPLIVIPVVLTVAMAGLVVWRSKRTDTLL.

The first 23 residues, methionine 1–proline 23, serve as a signal peptide directing secretion. At arginine 24 to aspartate 113 the chain is on the extracellular side. Asparagine 29, asparagine 58, asparagine 71, and asparagine 103 each carry an N-linked (GlcNAc...) asparagine glycan. Intrachain disulfides connect cysteine 40-cysteine 72 and cysteine 57-cysteine 104. The chain crosses the membrane as a helical span at residues proline 114–valine 138. The Cytoplasmic portion of the chain corresponds to tryptophan 139–leucine 148.

This sequence belongs to the RAMP family. In terms of assembly, heterodimer of CALCRL and RAMP3; interaction induces allosteric modulation of CALCRL function and ligand specificity for adrenomedullin/ADM and intermedin/ADM2. Heterodimer of CALCR and RAMP3; interaction form the receptor complex AMYR3 for amylin/IAPP. Interacts with GPER1. Strongly expressed in lung, breast, immune system and fetal tissues.

It localises to the cell membrane. The protein resides in the membrane. Functionally, accessory protein that interacts with and modulates the function of G-protein coupled receptors including calcitonin gene-related peptide type 1 receptor (CALCRL), calcitonin receptor (CALCR) and G-protein coupled estrogen receptor 1 (GPER1). Required for the transport of CALCRL and GPER1 receptors to the plasma membrane. Plays a role in cardioprotection by reducing cardiac hypertrophy and perivascular fibrosis in a GPER1-dependent manner. Together with CALCRL, form a receptor complex for adrenomedullin/ADM and intermedin/ADM2. Together with CALCR, act as a receptor complex for amylin/IAPP. This chain is Receptor activity-modifying protein 3, found in Homo sapiens (Human).